The following is a 59-amino-acid chain: UPF0434 protein Pnec_0311 (59 aa).

It belongs to the UPF0434 family.

In Polynucleobacter necessarius subsp. necessarius (strain STIR1), this protein is UPF0434 protein Pnec_0311.